The chain runs to 389 residues: Coproporphyrin III ferrochelatase (389 aa).

Fe-coproporphyrin III contacts are provided by Ser70 and Tyr139. His205 contributes to the Fe(2+) binding site. The disordered stretch occupies residues 207-229 (IPSTDAGKSGPSGRPDSGEPWGE). Fe(2+) is bound at residue Glu303.

The protein belongs to the ferrochelatase family.

It localises to the cytoplasm. The catalysed reaction is Fe-coproporphyrin III + 2 H(+) = coproporphyrin III + Fe(2+). It participates in porphyrin-containing compound metabolism; protoheme biosynthesis. Functionally, involved in coproporphyrin-dependent heme b biosynthesis. Catalyzes the insertion of ferrous iron into coproporphyrin III to form Fe-coproporphyrin III. This is Coproporphyrin III ferrochelatase from Leifsonia xyli subsp. xyli (strain CTCB07).